We begin with the raw amino-acid sequence, 667 residues long: Beta-galactosidase LacA (667 aa).

A substrate-binding site is contributed by R109. C113 lines the Zn(2+) pocket. N147 is a binding site for substrate. The active-site Proton donor is the E148. Residues C153, C155, and C158 each contribute to the Zn(2+) site. E307 acts as the Nucleophile in catalysis. Substrate-binding positions include W315 and 355–358 (EKFH).

Belongs to the glycosyl hydrolase 42 family.

It carries out the reaction Hydrolysis of terminal non-reducing beta-D-galactose residues in beta-D-galactosides.. In terms of biological role, hydrolyzes lactose, oNP-galactoside (oNPG), pNP-galactosidase (pNPG), pNP-mannoside, pNP-glucoside, pNP-fucoside, pNP-N-acetylglucosamide, but not pNP-arabinoside or 4-methylumbelliferyl-beta-galactopyranoside (MUG). Transgalactosylates lactose at 10 g/L, but not at 270 g/L. This chain is Beta-galactosidase LacA, found in Lactobacillus acidophilus.